Consider the following 276-residue polypeptide: Large ribosomal subunit protein uL2 (276 aa).

The tract at residues 224 to 265 (GTAMNPIDHPHGGGEGKNFGKHPVSPWGVQTKGKRTRSNKRT) is disordered.

This sequence belongs to the universal ribosomal protein uL2 family. As to quaternary structure, part of the 50S ribosomal subunit. Forms a bridge to the 30S subunit in the 70S ribosome.

Its function is as follows. One of the primary rRNA binding proteins. Required for association of the 30S and 50S subunits to form the 70S ribosome, for tRNA binding and peptide bond formation. It has been suggested to have peptidyltransferase activity; this is somewhat controversial. Makes several contacts with the 16S rRNA in the 70S ribosome. In Blochmanniella floridana, this protein is Large ribosomal subunit protein uL2.